Here is a 992-residue protein sequence, read N- to C-terminus: Translation initiation factor IF-2 (992 aa).

2 disordered regions span residues 154 to 173 and 338 to 399; these read RRLR…EREA and AAPG…RPES. The region spanning 492–661 is the tr-type G domain; that stretch reads PRAPVVTVMG…LLQAEVLELK (170 aa). Positions 501–508 are G1; it reads GHVDHGKT. 501–508 contacts GTP; that stretch reads GHVDHGKT. A G2 region spans residues 526 to 530; sequence GITQH. The segment at 547 to 550 is G3; that stretch reads DTPG. GTP-binding positions include 547 to 551 and 601 to 604; these read DTPGH and NKID. The tract at residues 601–604 is G4; that stretch reads NKID. The tract at residues 637 to 639 is G5; it reads SAH.

Belongs to the TRAFAC class translation factor GTPase superfamily. Classic translation factor GTPase family. IF-2 subfamily.

Its subcellular location is the cytoplasm. One of the essential components for the initiation of protein synthesis. Protects formylmethionyl-tRNA from spontaneous hydrolysis and promotes its binding to the 30S ribosomal subunits. Also involved in the hydrolysis of GTP during the formation of the 70S ribosomal complex. The protein is Translation initiation factor IF-2 of Polaromonas naphthalenivorans (strain CJ2).